The primary structure comprises 91 residues: uncharacterized protein (91 aa).

This is an uncharacterized protein from Rickettsia prowazekii (strain Madrid E).